Here is a 327-residue protein sequence, read N- to C-terminus: Ribonucleoside-diphosphate reductase small chain (327 aa).

Fe cation is bound by residues Asp70, Glu101, and His104. The active site involves Tyr108. The Fe cation site is built by Glu164, Glu198, and His201.

The protein belongs to the ribonucleoside diphosphate reductase small chain family. In terms of assembly, heterotetramer composed of a homodimer of the large subunit (R1) and a homodimer of the small subunit (R2). Larger multisubunit protein complex are also active, composed of (R1)n(R2)n. Requires Fe cation as cofactor.

The enzyme catalyses a 2'-deoxyribonucleoside 5'-diphosphate + [thioredoxin]-disulfide + H2O = a ribonucleoside 5'-diphosphate + [thioredoxin]-dithiol. In terms of biological role, ribonucleoside-diphosphate reductase holoenzyme provides the precursors necessary for viral DNA synthesis. Allows virus growth in non-dividing cells. Catalyzes the biosynthesis of deoxyribonucleotides from the corresponding ribonucleotides. The chain is Ribonucleoside-diphosphate reductase small chain from Ornithodoros (relapsing fever ticks).